The primary structure comprises 265 residues: Glutamate racemase (265 aa).

Substrate-binding positions include 12–13 (DS) and 44–45 (YG). The Proton donor/acceptor role is filled by Cys75. 76–77 (NT) contacts substrate. Cys186 serves as the catalytic Proton donor/acceptor. Residue 187–188 (TH) participates in substrate binding.

Belongs to the aspartate/glutamate racemases family.

It carries out the reaction L-glutamate = D-glutamate. The protein operates within cell wall biogenesis; peptidoglycan biosynthesis. Provides the (R)-glutamate required for cell wall biosynthesis. This is Glutamate racemase from Pseudomonas putida (strain GB-1).